The primary structure comprises 332 residues: MDFLALPKIDLHCHLDGSVRPDTIIDLAKQYNIELPEDRDAVVQSLTVPEDCKNLDEYLACFSLPLQVMQTEEAIERISFELYEDAALENVKYLEVRFAPILHVNKGLSLDTIIASAVKGMKRAEEKYDIKGNYIMSVLRMFPKDSIKDVIDAGQPYLGKGVVAFDIAGGEKPGFCAEFPEYTQYALEKGYRITVHAGEQWHGQNVYDAVTMLDAERIGHGVHIQGNEDAYNIVKEKQVALETCPTSNVQTKCIHQFSDHPIAEFKKDGIVVTINTDNRTVSNTTMTNEVKRVCETFGLTKEDYVEIYKYSVESAFASDEVKQHLMGFVEQI.

H12 and H14 together coordinate Zn(2+). Residues H14, D16, and G169 each coordinate substrate. H196 contributes to the Zn(2+) binding site. E199 functions as the Proton donor in the catalytic mechanism. D277 provides a ligand contact to Zn(2+).

The protein belongs to the metallo-dependent hydrolases superfamily. Adenosine and AMP deaminases family. Adenosine deaminase subfamily. It depends on Zn(2+) as a cofactor.

The enzyme catalyses adenosine + H2O + H(+) = inosine + NH4(+). It catalyses the reaction 2'-deoxyadenosine + H2O + H(+) = 2'-deoxyinosine + NH4(+). Functionally, catalyzes the hydrolytic deamination of adenosine and 2-deoxyadenosine. The protein is Adenosine deaminase of Vibrio atlanticus (strain LGP32) (Vibrio splendidus (strain Mel32)).